Consider the following 284-residue polypeptide: Putative L-ribulose-5-phosphate 3-epimerase UlaE (284 aa).

The protein belongs to the L-ribulose-5-phosphate 3-epimerase family.

It carries out the reaction L-ribulose 5-phosphate = L-xylulose 5-phosphate. Its pathway is cofactor degradation; L-ascorbate degradation; D-xylulose 5-phosphate from L-ascorbate: step 3/4. In terms of biological role, catalyzes the isomerization of L-xylulose-5-phosphate to L-ribulose-5-phosphate. Is involved in the anaerobic L-ascorbate utilization. The protein is Putative L-ribulose-5-phosphate 3-epimerase UlaE of Shigella dysenteriae serotype 1 (strain Sd197).